The primary structure comprises 323 residues: tRNA dimethylallyltransferase (323 aa).

An ATP-binding site is contributed by 12–19; the sequence is GPTAAGKT. 14 to 19 is a binding site for substrate; sequence TAAGKT. 2 interaction with substrate tRNA regions span residues 37–40 and 161–165; these read DSAL and QRLTR.

Belongs to the IPP transferase family. Monomer. Mg(2+) is required as a cofactor.

It catalyses the reaction adenosine(37) in tRNA + dimethylallyl diphosphate = N(6)-dimethylallyladenosine(37) in tRNA + diphosphate. Catalyzes the transfer of a dimethylallyl group onto the adenine at position 37 in tRNAs that read codons beginning with uridine, leading to the formation of N6-(dimethylallyl)adenosine (i(6)A). The sequence is that of tRNA dimethylallyltransferase from Pseudomonas fluorescens (strain ATCC BAA-477 / NRRL B-23932 / Pf-5).